Here is a 224-residue protein sequence, read N- to C-terminus: Ribonuclease 3 (224 aa).

Residues 4–127 enclose the RNase III domain; the sequence is IEKLEQSLTY…IIGAIHLEAG (124 aa). Residue Glu-40 participates in Mg(2+) binding. Asp-44 is an active-site residue. Residues Asp-113 and Glu-116 each contribute to the Mg(2+) site. Glu-116 is an active-site residue. Residues 154–223 enclose the DRBM domain; sequence DYKTKLQEIT…AKIALEKLGA (70 aa).

It belongs to the ribonuclease III family. In terms of assembly, homodimer. The cofactor is Mg(2+).

It is found in the cytoplasm. The catalysed reaction is Endonucleolytic cleavage to 5'-phosphomonoester.. Its function is as follows. Digests double-stranded RNA. Involved in the processing of primary rRNA transcript to yield the immediate precursors to the large and small rRNAs (23S and 16S). Also processes some mRNAs, and tRNAs when they are encoded in the rRNA operon. In terms of biological role, CRISPR (clustered regularly interspaced short palindromic repeat) is an adaptive immune system that provides protection against mobile genetic elements (viruses, transposable elements and conjugative plasmids). CRISPR clusters contain spacers, sequences complementary to antecedent mobile elements, and target invading nucleic acids. CRISPR clusters are transcribed and processed into CRISPR RNA (crRNA). In this organism endogenous ribonuclease 3 and Cas9 are required for correct coprocessing of pre-crRNA and the trans-encoded small RNA (tracrRNA). Cas9, crRNA and tracrRNA are required for cleavage of invading DNA. Complements pre-crRNA and tracrRNA coprocessing defects in an rnc deletion in S.pyogenes strain 370. In Campylobacter jejuni subsp. jejuni serotype O:2 (strain ATCC 700819 / NCTC 11168), this protein is Ribonuclease 3.